A 251-amino-acid chain; its full sequence is MMIHLLIVDALNLIRRIHAVQGSPCVNACQHALQQLIQHSRPTHAVAVFDEDDRSESWRHQILPDYKAGRSPMPDNLQQEMPQLRQAFESLGVACWHSPGNEADDLAATLTAKVAGGGHQVTIVSTDKGYCQLLAPSVQIRDYFQKRWLDMPFVQQEFGVSPQQLSDYWGLAGISSSKIPGVAGIGPKTAVLLLQQAGSLDGLYQDLEQVPEKWRGKLEQHREMAYVSKRVATLRTDLALTGNLQQLRLPV.

Asp104 provides a ligand contact to Mg(2+). Residues 160–248 (VSPQQLSDYW…ALTGNLQQLR (89 aa)) enclose the 5'-3' exonuclease domain. K(+) contacts are provided by Leu171, Ala172, Pro180, Val182, and Ile185. An interaction with DNA region spans residues 184 to 189 (GIGPKT).

Belongs to the Xni family. Mg(2+) serves as cofactor. It depends on K(+) as a cofactor.

Has flap endonuclease activity. During DNA replication, flap endonucleases cleave the 5'-overhanging flap structure that is generated by displacement synthesis when DNA polymerase encounters the 5'-end of a downstream Okazaki fragment. This chain is Flap endonuclease Xni, found in Serratia proteamaculans (strain 568).